Consider the following 259-residue polypeptide: MLANVVSRKASGLRQTPARATVAVKSVSGRRTTAAEPQTAAPVAAEDVFAYTKNLPGVTAPFEGVFDPAGFLATASIKDVRRWRESEITHGRVAMLAALGFVVGEQLQDFPLFFNWDGRVSGPAIYHFQQIGQGFWEPLLIAIGVAESYRVAVGWATPTGTGFNSLKDDYEPGDLGFDPLGLKPTDPEELKVMQTKELNNGRLAMIAIAAFVAQELVEQTEIFEHLALRFEKEAILELDDIERDLGLPVTPLPDNLKSL.

A chloroplast-targeting transit peptide spans 1-45 (MLANVVSRKASGLRQTPARATVAVKSVSGRRTTAAEPQTAAPVAA). Y51 contacts chlorophyll b. Chlorophyll a-binding residues include F66, E87, and H90. Chlorophyll b is bound at residue R92. Residues 93–113 (VAMLAALGFVVGEQLQDFPLF) form a helical membrane-spanning segment. A chlorophyll a-binding site is contributed by Q130. The helical transmembrane segment at 137-157 (EPLLIAIGVAESYRVAVGWAT) threads the bilayer. Residues E147 and R150 each contribute to the chlorophyll b site. Residues K196, E197, N200, R202, and Q214 each coordinate chlorophyll a. Residues 203-223 (LAMIAIAAFVAQELVEQTEIF) form a helical membrane-spanning segment.

Belongs to the light-harvesting chlorophyll a/b-binding (LHC) protein family. As to quaternary structure, interacts with the photosystem II-light-harvesting complex II (PSII-LHCII) supercomplex to form PSII-LHCII-LHCSR3 supercomplex.

It localises to the plastid. Its subcellular location is the chloroplast thylakoid membrane. In terms of biological role, required for non-photochemical quenching (NPQ), a mechanism that converts and dissipates the harmful excess absorbed light energy into heat and protect the photosynthetic apparatus from photo-oxidative damage. NPQ includes dissipating excess light energy to heat (qE) and the reversible coupling of LHCII to photosystems (state transitions or qT), which are considered separate NPQ mechanisms. Is responsible for most of the excess light energy to heat dissipation (qE), also known as energy-dependent chlorophyll fluorescence quenching activity of chlorophyll excited states. Involved in a de-coupling and re-coupling of energy transfer to photosystem II (PSII) during qT. Binds chlorophyll a and b. Is able to sense luminal acidification of the thylakoid membranes, which occurs along with elevated electron flow caused by excess light. Establishes interactions with photosystem II (PSII) antenna components upon lumen acidification, and protonation of lumen-exposed, negatively charged residues both in LHCSR3 and in PSII antenna components. Mediates excitation energy transfer from light-harvesting complex II (LHCII) to photosystem I (PSI), rather than photosystem II (PSII), at low pH, which mimics the acidified lumen of the thylakoid membranes in high light-exposed chloroplasts. Activates PSI-dependent fluorescence quenching in addition to dissipating excitation energy in LHCII to avoid photooxidative stress under excess light. Contributes with PGRL1 to the regulation of electron flow upstream of photosystem I (PSI), and limits the accumulation of electrons on the PSI acceptor side, thus avoiding PSI photoinhibition. The sequence is that of Light-harvesting complex stress-related protein 3.1, chloroplastic from Chlamydomonas reinhardtii (Chlamydomonas smithii).